Reading from the N-terminus, the 224-residue chain is Ribose-5-phosphate isomerase A (224 aa).

Substrate contacts are provided by residues Thr26 to Thr29, Asp82 to Asp85, and Lys95 to Gly98. Catalysis depends on Glu104, which acts as the Proton acceptor. Lys122 serves as a coordination point for substrate.

Belongs to the ribose 5-phosphate isomerase family. In terms of assembly, homodimer.

It carries out the reaction aldehydo-D-ribose 5-phosphate = D-ribulose 5-phosphate. It functions in the pathway carbohydrate degradation; pentose phosphate pathway; D-ribose 5-phosphate from D-ribulose 5-phosphate (non-oxidative stage): step 1/1. Functionally, catalyzes the reversible conversion of ribose-5-phosphate to ribulose 5-phosphate. The sequence is that of Ribose-5-phosphate isomerase A from Streptococcus suis (strain 98HAH33).